The following is a 275-amino-acid chain: Nitrogenase iron protein 3 (275 aa).

9 to 16 (GKGGIGKS) is a binding site for ATP. Cys-97 provides a ligand contact to [4Fe-4S] cluster. At Arg-100 the chain carries ADP-ribosylarginine; by dinitrogenase reductase ADP-ribosyltransferase. Cys-132 contacts [4Fe-4S] cluster.

It belongs to the NifH/BchL/ChlL family. As to quaternary structure, homodimer. The cofactor is [4Fe-4S] cluster. Post-translationally, the reversible ADP-ribosylation of Arg-100 inactivates the nitrogenase reductase and regulates nitrogenase activity.

It carries out the reaction N2 + 8 reduced [2Fe-2S]-[ferredoxin] + 16 ATP + 16 H2O = H2 + 8 oxidized [2Fe-2S]-[ferredoxin] + 2 NH4(+) + 16 ADP + 16 phosphate + 6 H(+). The key enzymatic reactions in nitrogen fixation are catalyzed by the nitrogenase complex, which has 2 components: the iron protein (component 2) and a component 1 which is either a molybdenum-iron protein, a vanadium-iron, or an iron-iron protein. This chain is Nitrogenase iron protein 3 (anfH), found in Azotobacter vinelandii.